The chain runs to 445 residues: MKIFGTDGVRGRAGVKLTPMFVMRLGIAAGLYFKKHSKTDKILIGKDTRKSGYMVENALVSALTSIGYNVIQIGPMPTPAIAFLTEDMRCDAGIMISASHNPFEDNGIKFFNSYGYKLKEEEERAIEEIFHNEELLHSSYKVGESVGNAKRIDDVIGRYIVHLKHSFPKHLNLQSLRIVLDTANGAAYKVAPVVFSELGADVLVINDEPNGCNINEQCGALHPNQLSQEVKKYRADLGFAFDGDADRLVVVDNLGNIVHGDKLLGVLGVYQKSKNALSSQAIVATNMSNLALKEYLKSQDLELKHCTIGDKFVSECMQLNKANFGGEQSGHIIFSDYAKTGDGLVCALQVSALVLESKLASSVALNPFELYPQSLVNLDIQKKLPLESLKGYSALLKELDKLEIRHLIRYSGTENKLRILLEAKDEKLLELKMQELKEFFEGHLC.

Serine 99 serves as the catalytic Phosphoserine intermediate. Mg(2+)-binding residues include serine 99, aspartate 242, aspartate 244, and aspartate 246. Serine 99 is modified (phosphoserine).

It belongs to the phosphohexose mutase family. Requires Mg(2+) as cofactor. In terms of processing, activated by phosphorylation.

It carries out the reaction alpha-D-glucosamine 1-phosphate = D-glucosamine 6-phosphate. Its function is as follows. Catalyzes the conversion of glucosamine-6-phosphate to glucosamine-1-phosphate. The chain is Phosphoglucosamine mutase from Helicobacter acinonychis (strain Sheeba).